The sequence spans 575 residues: Serine/threonine-protein phosphatase 2A regulatory subunit B'' subunit beta (575 aa).

The interval 41–131 (APGRDQPTPG…SQSIPTFYFP (91 aa)) is disordered. Positions 388–423 (KTPTSIEYWFRCMDLDGDGALSMFELEYFYEEQCRR) constitute an EF-hand domain. Positions 401, 403, 405, and 412 each coordinate Ca(2+).

PP2A consists of a common heterodimeric core enzyme, composed of a 36 kDa catalytic subunit (subunit C) and a 65 kDa constant regulatory subunit (PR65 or subunit A), that associates with a variety of regulatory subunits. Proteins that associate with the core dimer include three families of regulatory subunits B (the R2/B/PR55/B55, R3/B''/PR72/PR130/PR59 and R5/B'/B56 families), the 48 kDa variable regulatory subunit, viral proteins, and cell signaling molecules. Interacts with N-terminal region of CDC6. Interacts with NOD2.

The protein localises to the nucleus. Functionally, the B regulatory subunit might modulate substrate selectivity and catalytic activity, and might also direct the localization of the catalytic enzyme to a particular subcellular compartment. In Homo sapiens (Human), this protein is Serine/threonine-protein phosphatase 2A regulatory subunit B'' subunit beta (PPP2R3B).